We begin with the raw amino-acid sequence, 264 residues long: Mitochondrial distribution and morphology protein 12 (264 aa).

An SMP-LTD domain is found at 1–232; sequence MSFDINWNKI…WPSWINLDFN (232 aa). The interval 240–264 is disordered; it reads ESSSSAEESLPHRDDAQDFSADARA. Residues 248 to 264 are compositionally biased toward basic and acidic residues; it reads SLPHRDDAQDFSADARA.

It belongs to the MDM12 family. In terms of assembly, component of the ER-mitochondria encounter structure (ERMES) or MDM complex, composed of MMM1, MDM10, MDM12 and MDM34. An MMM1 homodimer associates with one molecule of MDM12 on each side in a pairwise head-to-tail manner, and the SMP-LTD domains of MMM1 and MDM12 generate a continuous hydrophobic tunnel for phospholipid trafficking.

It is found in the mitochondrion outer membrane. It localises to the endoplasmic reticulum membrane. Functionally, component of the ERMES/MDM complex, which serves as a molecular tether to connect the endoplasmic reticulum (ER) and mitochondria. Components of this complex are involved in the control of mitochondrial shape and protein biogenesis, and function in nonvesicular lipid trafficking between the ER and mitochondria. MDM12 is required for the interaction of the ER-resident membrane protein MMM1 and the outer mitochondrial membrane-resident beta-barrel protein MDM10. The MDM12-MMM1 subcomplex functions in the major beta-barrel assembly pathway that is responsible for biogenesis of all mitochondrial outer membrane beta-barrel proteins, and acts in a late step after the SAM complex. The MDM10-MDM12-MMM1 subcomplex further acts in the TOM40-specific pathway after the action of the MDM12-MMM1 complex. Essential for establishing and maintaining the structure of mitochondria and maintenance of mtDNA nucleoids. The chain is Mitochondrial distribution and morphology protein 12 from Eremothecium gossypii (strain ATCC 10895 / CBS 109.51 / FGSC 9923 / NRRL Y-1056) (Yeast).